We begin with the raw amino-acid sequence, 337 residues long: Trace amine-associated receptor 5 (337 aa).

The Extracellular segment spans residues 1–34; it reads MRAVFIQGAEEHPAAFCYQVNGSCPRTVHTLGIQ. The N-linked (GlcNAc...) asparagine glycan is linked to Asn-21. Cystine bridges form between Cys-24–Cys-188 and Cys-99–Cys-192. A helical membrane pass occupies residues 35–55; the sequence is LVIYLACAAGMLIIVLGNLFV. Topologically, residues 56–70 are cytoplasmic; the sequence is AFAVSYFKALHTPTN. A helical membrane pass occupies residues 71–91; the sequence is FLLLSLALADMFLGLLVLPLS. The Extracellular portion of the chain corresponds to 92–109; it reads TIRSVESCWFFGDFLCRL. A helical transmembrane segment spans residues 110–130; that stretch reads HTYLDPLFCLTSIFHLCFISI. Over 131 to 154 the chain is Cytoplasmic; sequence DRHCAICDPLLYPSKFTVRVALRY. A helical transmembrane segment spans residues 155–175; sequence ILAGWGVPAAYTSLFLYTDVV. Residues 176–189 are extracellular Loop 2 (ECL2); sequence ETRLSQWLEEMPCV. Residues 176-204 are Extracellular-facing; the sequence is ETRLSQWLEEMPCVGSCQLLLNKFWGWLN. A helical membrane pass occupies residues 205–225; the sequence is FPLFFVPCLIMISLYVKIFVV. Over 226–253 the chain is Cytoplasmic; it reads ATRQAQQITTLSKNLAGAAKHDRKAAKT. Residues 254–274 traverse the membrane as a helical segment; sequence LGIAVGIYLLCWLPFTIDTMV. Residues 275 to 284 are Extracellular-facing; sequence DSLLHFITPP. Residues 285-307 traverse the membrane as a helical segment; it reads LVFDIFIWFAYFNSACNPIIYVF. Residues 308 to 337 lie on the Cytoplasmic side of the membrane; sequence SYQWFRKALKLTLSQKVFSPQTRTVDLYQE.

The protein belongs to the G-protein coupled receptor 1 family.

It localises to the cell membrane. Its function is as follows. Olfactory receptor specific for trimethylamine, a trace amine. Trimethylamine is a bacterial metabolite found in some animal odors. Trimethylamine-binding causes a conformation change that triggers signaling via G(s)-class of G alpha proteins (GNAL or GNAS). The sequence is that of Trace amine-associated receptor 5 (TAAR5) from Pan troglodytes (Chimpanzee).